Here is a 418-residue protein sequence, read N- to C-terminus: Gamma-glutamyl phosphate reductase (418 aa).

This sequence belongs to the gamma-glutamyl phosphate reductase family.

Its subcellular location is the cytoplasm. The enzyme catalyses L-glutamate 5-semialdehyde + phosphate + NADP(+) = L-glutamyl 5-phosphate + NADPH + H(+). It participates in amino-acid biosynthesis; L-proline biosynthesis; L-glutamate 5-semialdehyde from L-glutamate: step 2/2. In terms of biological role, catalyzes the NADPH-dependent reduction of L-glutamate 5-phosphate into L-glutamate 5-semialdehyde and phosphate. The product spontaneously undergoes cyclization to form 1-pyrroline-5-carboxylate. This is Gamma-glutamyl phosphate reductase from Photobacterium profundum (strain SS9).